The sequence spans 936 residues: Aconitate hydratase A (936 aa).

The disordered stretch occupies residues 401 to 449; that stretch reads VTPDFDAEGPATENTSAQTAGTPASAADAKGNIPSAAAGAEGRPSNPVT. Polar residues predominate over residues 412–422; that stretch reads TENTSAQTAGT. Cys-472, Cys-538, and Cys-541 together coordinate [4Fe-4S] cluster.

This sequence belongs to the aconitase/IPM isomerase family. In terms of assembly, monomer. [4Fe-4S] cluster serves as cofactor.

It carries out the reaction citrate = D-threo-isocitrate. The enzyme catalyses (2S,3R)-3-hydroxybutane-1,2,3-tricarboxylate = 2-methyl-cis-aconitate + H2O. The protein operates within carbohydrate metabolism; tricarboxylic acid cycle; isocitrate from oxaloacetate: step 2/2. Its pathway is organic acid metabolism; propanoate degradation. Functionally, involved in the catabolism of short chain fatty acids (SCFA) via the tricarboxylic acid (TCA)(acetyl degradation route) and probably via the 2-methylcitrate cycle I (propionate degradation route). Catalyzes the reversible isomerization of citrate to isocitrate via cis-aconitate. Could catalyze the hydration of 2-methyl-cis-aconitate to yield (2R,3S)-2-methylisocitrate. The apo form of AcnA functions as a RNA-binding regulatory protein. The protein is Aconitate hydratase A (acn) of Corynebacterium jeikeium (strain K411).